The following is a 256-amino-acid chain: Calsenilin (256 aa).

The interval 1–22 (MQRTKEAVKASDGNLLGDPGRI) is disordered. Lys-26 participates in a covalent cross-link: Glycyl lysine isopeptide (Lys-Gly) (interchain with G-Cter in SUMO1). 2 S-palmitoyl cysteine lipidation sites follow: Cys-45 and Cys-46. Ser-60 and Ser-63 each carry phosphoserine. The EF-hand 1; degenerate domain occupies 67-123 (LELSTVRHQPEGLDQLQAQTKFTKKELQSLYRGFKNECPTGLVDEDTFKLIYSQFFP). A Glycyl lysine isopeptide (Lys-Gly) (interchain with G-Cter in SUMO1) cross-link involves residue Lys-90. 3 consecutive EF-hand domains span residues 126–161 (DATT…LLRG), 162–197 (TVHE…IYDM), and 210–245 (APLE…DENI). Ca(2+) is bound by residues Asp-175, Asn-177, Asp-179, Cys-181, Glu-186, Asp-223, Asn-225, Asp-227, and Glu-234. Positions 243 to 256 (ENIMNSMQLFENVI) are interaction with KCND2.

Belongs to the recoverin family. In terms of assembly, binds to DNA as a homomultimer. Dimerization is induced by binding to calcium. Interacts with the C-terminus of PSEN1 and PSEN2 and with PSEN2 CTF subunit. Associates with KCN1. Component of heteromultimeric potassium channels. Identified in potassium channel complexes containing KCND1, KCND2, KCND3, KCNIP1, KCNIP2, KCNIP3, KCNIP4, DPP6 and DPP10. Interacts with KCND2 and KCND3. In terms of processing, palmitoylated. Palmitoylation enhances association with the plasma membrane. Post-translationally, proteolytically cleaved by caspase-3. Highly expressed in brain. Isoform 1 or isoform 4 (T+ forms) are expressed at equal levels with isoform 2 or isoform 3 (T- forms). Primarily detected in the layer V and deep layer VI of the cerebral cortex, the hippocampus, and the entire cerebellum. Expressed at low levels in testis. Also expressed in heart.

Its subcellular location is the cytoplasm. It is found in the cell membrane. The protein resides in the endoplasmic reticulum. The protein localises to the golgi apparatus. It localises to the nucleus. Calcium-dependent transcriptional repressor that binds to the DRE element of genes including PDYN and FOS. Affinity for DNA is reduced upon binding to calcium and enhanced by binding to magnesium. Seems to be involved in nociception. In terms of biological role, regulatory subunit of Kv4/D (Shal)-type voltage-gated rapidly inactivating A-type potassium channels, such as KCND2/Kv4.2 and KCND3/Kv4.3. Modulates channel expression at the cell membrane, gating characteristics, inactivation kinetics and rate of recovery from inactivation in a calcium-dependent and isoform-specific manner. Functionally, may play a role in the regulation of PSEN2 proteolytic processing and apoptosis. Together with PSEN2 involved in modulation of amyloid-beta formation. This chain is Calsenilin (Kcnip3), found in Mus musculus (Mouse).